We begin with the raw amino-acid sequence, 77 residues long: uncharacterized protein (77 aa).

Basic residues predominate over residues 1 to 10 (MFNNKGRRNV). The interval 1–21 (MFNNKGRRNVRNNEVRRNVPV) is disordered. The segment covering 11–21 (RNNEVRRNVPV) has biased composition (basic and acidic residues). One can recognise a TRAM domain in the interval 20–77 (PVKEGETYTVTIEDMGRGGDGIARVEGFVVFVPETQKGETVNVKITAVKSKFAFAEKI).

This is an uncharacterized protein from Methanocaldococcus jannaschii (strain ATCC 43067 / DSM 2661 / JAL-1 / JCM 10045 / NBRC 100440) (Methanococcus jannaschii).